A 228-amino-acid polypeptide reads, in one-letter code: MVQAKIAPSLLAGDFANLEKEVGRMLKYGSDWLHVDVMDAQFVPNLTIGPIVVKAMRNHYTKEEAFFDCHLMVIEPERYIDQLADAGASLFCFHYEATEKHEEIISRAHEKGMLVGCALKPKTPVEVILPFVEKLDMVLVMTVEPGKGGQSFMPECLPKVEFLRKKYPTLNVEVDGGLSLKTVDAAADAGANVIVAGTAVFHAQSPEEVISGLRNSVMKAQETKPWFK.

S9 lines the substrate pocket. Residues H34, D36, and H70 each coordinate a divalent metal cation. The Proton acceptor role is filled by D36. Residues H70, 146–149 (GKGG), 175–177 (DGG), and 197–198 (GT) contribute to the substrate site. D175 lines the a divalent metal cation pocket. The Proton donor role is filled by D175.

It belongs to the ribulose-phosphate 3-epimerase family. Requires Co(2+) as cofactor. The cofactor is Fe(2+). It depends on Mn(2+) as a cofactor. Zn(2+) is required as a cofactor.

The enzyme catalyses D-ribulose 5-phosphate = D-xylulose 5-phosphate. It functions in the pathway carbohydrate degradation; pentose phosphate pathway; D-xylulose 5-phosphate from D-ribulose 5-phosphate (non-oxidative stage): step 1/1. Functionally, catalyzes the reversible epimerization of D-ribulose 5-phosphate to D-xylulose 5-phosphate. The polypeptide is Ribulose-phosphate 3-epimerase (Schizosaccharomyces pombe (strain 972 / ATCC 24843) (Fission yeast)).